Here is a 600-residue protein sequence, read N- to C-terminus: Aspartate--tRNA(Asp/Asn) ligase (600 aa).

Glutamate 174 provides a ligand contact to L-aspartate. The aspartate stretch occupies residues 198 to 201; it reads QLFK. Arginine 220 contributes to the L-aspartate binding site. Residues 220–222 and glutamine 229 contribute to the ATP site; that span reads RDE. Residue histidine 457 participates in L-aspartate binding. Glutamate 491 is a binding site for ATP. Residue arginine 498 participates in L-aspartate binding. Residue 543–546 participates in ATP binding; sequence GLDR.

Belongs to the class-II aminoacyl-tRNA synthetase family. Type 1 subfamily. In terms of assembly, homodimer.

It localises to the cytoplasm. It catalyses the reaction tRNA(Asx) + L-aspartate + ATP = L-aspartyl-tRNA(Asx) + AMP + diphosphate. Aspartyl-tRNA synthetase with relaxed tRNA specificity since it is able to aspartylate not only its cognate tRNA(Asp) but also tRNA(Asn). Reaction proceeds in two steps: L-aspartate is first activated by ATP to form Asp-AMP and then transferred to the acceptor end of tRNA(Asp/Asn). The polypeptide is Aspartate--tRNA(Asp/Asn) ligase (Burkholderia orbicola (strain MC0-3)).